The primary structure comprises 492 residues: Phosphatidylinositol 4-kinase type 2-beta (492 aa).

Positions 1-11 (MEPKQTADARD) are enriched in basic and acidic residues. The interval 1 to 98 (MEPKQTADAR…SDRENMSGGH (98 aa)) is disordered. In terms of domain architecture, PI3K/PI4K catalytic spans 127–462 (GVFPERISQG…VQMPRVVVER (336 aa)). A G-loop region spans residues 133–139 (ISQGSSG). 2 residues coordinate ATP: Ser140 and Lys155. The important for substrate binding stretch occupies residues 160 to 162 (EPY). An important for interaction with membranes region spans residues 168 to 181 (KWTKYFHKICCPCC). ATP is bound by residues 264-267 (QLFV) and 278-279 (RK). The interval 271–279 (KEADYWLRK) is important for interaction with membranes. The segment at 308–316 (RNTDRGNDN) is catalytic loop. An activation loop region spans residues 353–373 (AIDNGLAFPFKHPDEWRAYPF). Residue Asp355 coordinates ATP. Positions 368-377 (WRAYPFHWAW) are important for interaction with membranes.

It belongs to the PI3/PI4-kinase family. Type II PI4K subfamily.

The protein localises to the cytoplasm. Its subcellular location is the cytosol. The protein resides in the golgi apparatus membrane. It is found in the endoplasmic reticulum membrane. It localises to the cell membrane. The protein localises to the early endosome membrane. It catalyses the reaction a 1,2-diacyl-sn-glycero-3-phospho-(1D-myo-inositol) + ATP = a 1,2-diacyl-sn-glycero-3-phospho-(1D-myo-inositol 4-phosphate) + ADP + H(+). Contributes to the overall PI4-kinase activity of the cell. This contribution may be especially significant in plasma membrane, endosomal and Golgi compartments. The phosphorylation of phosphatidylinositol (PI) to PI4P is the first committed step in the generation of phosphatidylinositol 4,5-bisphosphate (PIP2), a precursor of the second messenger inositol 1,4,5-trisphosphate (InsP3). This is Phosphatidylinositol 4-kinase type 2-beta (pi4k2b) from Xenopus tropicalis (Western clawed frog).